The chain runs to 469 residues: Biotin synthase (469 aa).

The Radical SAM core domain maps to 51 to 278 (MTVKVNYLVN…DKEIRMAGGR (228 aa)). The [4Fe-4S] cluster site is built by cysteine 66, cysteine 70, and cysteine 73. 4 residues coordinate [2Fe-2S] cluster: cysteine 110, cysteine 143, cysteine 203, and arginine 273. The tract at residues 326 to 469 (AGPDPSRDRH…GAGTSVAPNA (144 aa)) is disordered. Composition is skewed to low complexity over residues 363–384 (GSAA…APAD) and 405–428 (AGGP…MSPA).

The protein belongs to the radical SAM superfamily. Biotin synthase family. As to quaternary structure, homodimer. It depends on [4Fe-4S] cluster as a cofactor. The cofactor is [2Fe-2S] cluster.

The enzyme catalyses (4R,5S)-dethiobiotin + (sulfur carrier)-SH + 2 reduced [2Fe-2S]-[ferredoxin] + 2 S-adenosyl-L-methionine = (sulfur carrier)-H + biotin + 2 5'-deoxyadenosine + 2 L-methionine + 2 oxidized [2Fe-2S]-[ferredoxin]. Its pathway is cofactor biosynthesis; biotin biosynthesis; biotin from 7,8-diaminononanoate: step 2/2. Catalyzes the conversion of dethiobiotin (DTB) to biotin by the insertion of a sulfur atom into dethiobiotin via a radical-based mechanism. This chain is Biotin synthase, found in Kocuria rhizophila (strain ATCC 9341 / DSM 348 / NBRC 103217 / DC2201).